A 332-amino-acid polypeptide reads, in one-letter code: HPr kinase/phosphorylase (332 aa).

Residues histidine 153 and lysine 174 contribute to the active site. 168 to 175 is a binding site for ATP; it reads GKSGLGKS. Residue serine 175 coordinates Mg(2+). Residue aspartate 192 is the Proton acceptor; for phosphorylation activity. Proton donor; for dephosphorylation activity of the active site. An important for the catalytic mechanism of both phosphorylation and dephosphorylation region spans residues 217 to 226; the sequence is MEIRGLGVVD. Glutamate 218 is a binding site for Mg(2+). Residue arginine 259 is part of the active site. An important for the catalytic mechanism of dephosphorylation region spans residues 280 to 285; sequence PIFPGK.

Belongs to the HPrK/P family. In terms of assembly, homohexamer. Mg(2+) is required as a cofactor.

It catalyses the reaction [HPr protein]-L-serine + ATP = [HPr protein]-O-phospho-L-serine + ADP + H(+). The enzyme catalyses [HPr protein]-O-phospho-L-serine + phosphate + H(+) = [HPr protein]-L-serine + diphosphate. Functionally, catalyzes the ATP- as well as the pyrophosphate-dependent phosphorylation of a specific serine residue in HPr, a phosphocarrier protein of the phosphoenolpyruvate-dependent sugar phosphotransferase system (PTS). HprK/P also catalyzes the pyrophosphate-producing, inorganic phosphate-dependent dephosphorylation (phosphorolysis) of seryl-phosphorylated HPr (P-Ser-HPr). The protein is HPr kinase/phosphorylase of Chlorobium luteolum (strain DSM 273 / BCRC 81028 / 2530) (Pelodictyon luteolum).